The following is a 325-amino-acid chain: GMP reductase (325 aa).

The active-site Thioimidate intermediate is the C174. 203–226 contributes to the NADP(+) binding site; it reads IIADGGLRTHGDIAKSIRFGATMV.

The protein belongs to the IMPDH/GMPR family. GuaC type 2 subfamily.

The catalysed reaction is IMP + NH4(+) + NADP(+) = GMP + NADPH + 2 H(+). Functionally, catalyzes the irreversible NADPH-dependent deamination of GMP to IMP. It functions in the conversion of nucleobase, nucleoside and nucleotide derivatives of G to A nucleotides, and in maintaining the intracellular balance of A and G nucleotides. This chain is GMP reductase, found in Staphylococcus epidermidis (strain ATCC 35984 / DSM 28319 / BCRC 17069 / CCUG 31568 / BM 3577 / RP62A).